The sequence spans 311 residues: Mediator of RNA polymerase II transcription subunit 27-A (311 aa).

The protein belongs to the Mediator complex subunit 27 family. As to quaternary structure, component of the Mediator complex.

It localises to the nucleus. In terms of biological role, component of the Mediator complex, a coactivator involved in the regulated transcription of nearly all RNA polymerase II-dependent genes. Mediator functions as a bridge to convey information from gene-specific regulatory proteins to the basal RNA polymerase II transcription machinery. Mediator is recruited to promoters by direct interactions with regulatory proteins and serves as a scaffold for the assembly of a functional preinitiation complex with RNA polymerase II and the general transcription factors. This is Mediator of RNA polymerase II transcription subunit 27-A (med27-a) from Xenopus laevis (African clawed frog).